A 777-amino-acid polypeptide reads, in one-letter code: Elongation factor G, mitochondrial (777 aa).

The region spanning 34–338 (LRQRNVGISA…GMCAYLPNPM (305 aa)) is the tr-type G domain. Residues 43–50 (AHIDSGKT), 136–140 (DTPGH), and 190–193 (NKMD) contribute to the GTP site.

It belongs to the TRAFAC class translation factor GTPase superfamily. Classic translation factor GTPase family. EF-G/EF-2 subfamily.

The protein resides in the mitochondrion. Its pathway is protein biosynthesis; polypeptide chain elongation. Functionally, mitochondrial GTPase that catalyzes the GTP-dependent ribosomal translocation step during translation elongation. During this step, the ribosome changes from the pre-translocational (PRE) to the post-translocational (POST) state as the newly formed A-site-bound peptidyl-tRNA and P-site-bound deacylated tRNA move to the P and E sites, respectively. Catalyzes the coordinated movement of the two tRNA molecules, the mRNA and conformational changes in the ribosome. This chain is Elongation factor G, mitochondrial, found in Malassezia globosa (strain ATCC MYA-4612 / CBS 7966) (Dandruff-associated fungus).